The chain runs to 297 residues: Aspartate carbamoyltransferase catalytic subunit (297 aa).

Carbamoyl phosphate contacts are provided by R49 and T50. K77 lines the L-aspartate pocket. The carbamoyl phosphate site is built by R99, H129, and Q132. L-aspartate contacts are provided by R162 and R215. Residues G256 and P257 each contribute to the carbamoyl phosphate site.

This sequence belongs to the aspartate/ornithine carbamoyltransferase superfamily. ATCase family. In terms of assembly, heterododecamer (2C3:3R2) of six catalytic PyrB chains organized as two trimers (C3), and six regulatory PyrI chains organized as three dimers (R2).

The catalysed reaction is carbamoyl phosphate + L-aspartate = N-carbamoyl-L-aspartate + phosphate + H(+). Its pathway is pyrimidine metabolism; UMP biosynthesis via de novo pathway; (S)-dihydroorotate from bicarbonate: step 2/3. Catalyzes the condensation of carbamoyl phosphate and aspartate to form carbamoyl aspartate and inorganic phosphate, the committed step in the de novo pyrimidine nucleotide biosynthesis pathway. In Legionella pneumophila (strain Lens), this protein is Aspartate carbamoyltransferase catalytic subunit.